The primary structure comprises 423 residues: UPF0229 protein PSPTO_0546 (423 aa).

The disordered stretch occupies residues 65–110 (HHGRGGKQTVVHPGNKEFTTGEHIARPQGGAGGKGPGKAGNSGEGM). The span at 93 to 107 (GGAGGKGPGKAGNSG) shows a compositional bias: gly residues.

Belongs to the UPF0229 family.

The protein is UPF0229 protein PSPTO_0546 of Pseudomonas syringae pv. tomato (strain ATCC BAA-871 / DC3000).